The sequence spans 227 residues: Phosphoglycolate phosphatase (227 aa).

The active-site Nucleophile is aspartate 13. The Mg(2+) site is built by aspartate 13, aspartate 15, and aspartate 176.

It belongs to the HAD-like hydrolase superfamily. CbbY/CbbZ/Gph/YieH family. Requires Mg(2+) as cofactor.

The catalysed reaction is 2-phosphoglycolate + H2O = glycolate + phosphate. The protein operates within organic acid metabolism; glycolate biosynthesis; glycolate from 2-phosphoglycolate: step 1/1. Functionally, specifically catalyzes the dephosphorylation of 2-phosphoglycolate. Is involved in the dissimilation of the intracellular 2-phosphoglycolate formed during the DNA repair of 3'-phosphoglycolate ends, a major class of DNA lesions induced by oxidative stress. In Nitrosospira multiformis (strain ATCC 25196 / NCIMB 11849 / C 71), this protein is Phosphoglycolate phosphatase.